We begin with the raw amino-acid sequence, 417 residues long: Hydroxysqualene dehydroxylase (417 aa).

Belongs to the HpnE family.

It catalyses the reaction squalene + FAD + H2O + H(+) = hydroxysqualene + FADH2. The protein operates within secondary metabolite biosynthesis; hopanoid biosynthesis. Functionally, involved in the biosynthesis of the hopanoid precursor squalene (SQ) from farnesyl diphosphate (FPP). Catalyzes the third (last) step, the reduction of hydroxysqualene (HSQ) to SQ. This chain is Hydroxysqualene dehydroxylase, found in Sinorhizobium fredii (strain NBRC 101917 / NGR234).